The chain runs to 466 residues: MVLDDLGSSLRGTLDKLQGKTTLSEDDVEEIVKEIQRSLLSADVDVDLVMDLSDSIRERALDEEPPAGTTARDHVLKIVYEEMVELVGESTALPLEEQTIVLAGLQGSGKTTTAAKMAWWFSKKGLRPAVIQTDTFRPGAYDQAKEMCERAEVDFYGNPDSDDPVEIAERGLEETADADVHIVDTAGRHALEEALIDELEAIESAVDPDRNLLVLDAAIGQGAKDQAERFHDAVGIDGVAITKLDGTAKGGGALAAVDQTDSSIAFLGTGEEVKDIERFEPSGFISRLLGMGDLKQLSERVERAMEETQAEEDWDPEDLMKGEFTLKDMRNQMNAMNKMGPLDQVMDMIPGLGGGIKDQLPDDAMDMTQERLRDFEVIMDSMSEAELENPRAIGQSQIERIARGSGTDEDTVRELLEQHKMMSRMMKQFQGMGDGDMQRMMKQMQQGGGGGGGGGGGLGGMGPFGD.

GTP is bound by residues 104–111 (GLQGSGKT), 184–188 (DTAGR), and 242–245 (TKLD). Residues 444-466 (MQQGGGGGGGGGGGLGGMGPFGD) are disordered. The segment covering 446–466 (QGGGGGGGGGGGLGGMGPFGD) has biased composition (gly residues).

This sequence belongs to the GTP-binding SRP family. SRP54 subfamily. In terms of assembly, part of the signal recognition particle protein translocation system, which is composed of SRP and FtsY. Archaeal SRP consists of a 7S RNA molecule of 300 nucleotides and two protein subunits: SRP54 and SRP19.

The protein resides in the cytoplasm. It carries out the reaction GTP + H2O = GDP + phosphate + H(+). In terms of biological role, involved in targeting and insertion of nascent membrane proteins into the cytoplasmic membrane. Binds to the hydrophobic signal sequence of the ribosome-nascent chain (RNC) as it emerges from the ribosomes. The SRP-RNC complex is then targeted to the cytoplasmic membrane where it interacts with the SRP receptor FtsY. The polypeptide is Signal recognition particle 54 kDa protein (Natronomonas pharaonis (strain ATCC 35678 / DSM 2160 / CIP 103997 / JCM 8858 / NBRC 14720 / NCIMB 2260 / Gabara) (Halobacterium pharaonis)).